The following is a 296-amino-acid chain: 4-hydroxybenzoate octaprenyltransferase (296 aa).

The next 8 membrane-spanning stretches (helical) occupy residues 29–49 (IGIYLLLWPTLWSLWIAADGV), 55–75 (LLIFVLGVILMRAAGCVINDF), 102–122 (AWITFAVLVALSFGLVLLTNA), 146–166 (YYPQVVLGAAYSWGILMAFTA), 169–189 (GELPASAWLLFLANVLWTVAY), 219–239 (LIIGSLQGLTLLLLVLAGNRF), 241–261 (LGLCFYLGLAVAAACFVWEAW), and 275–295 (FLHNHWAGLAIFLGTVADYAL).

Belongs to the UbiA prenyltransferase family. Mg(2+) serves as cofactor.

It localises to the cell inner membrane. It catalyses the reaction all-trans-octaprenyl diphosphate + 4-hydroxybenzoate = 4-hydroxy-3-(all-trans-octaprenyl)benzoate + diphosphate. It participates in cofactor biosynthesis; ubiquinone biosynthesis. Catalyzes the prenylation of para-hydroxybenzoate (PHB) with an all-trans polyprenyl group. Mediates the second step in the final reaction sequence of ubiquinone-8 (UQ-8) biosynthesis, which is the condensation of the polyisoprenoid side chain with PHB, generating the first membrane-bound Q intermediate 3-octaprenyl-4-hydroxybenzoate. This is 4-hydroxybenzoate octaprenyltransferase from Pseudomonas aeruginosa (strain LESB58).